The primary structure comprises 43 residues: Large ribosomal subunit protein uL5 (43 aa).

The protein belongs to the universal ribosomal protein uL5 family. In terms of assembly, part of the 50S ribosomal subunit; part of the 5S rRNA/L5/L18/L25 subcomplex. Contacts the 5S rRNA and the P site tRNA. Forms a bridge to the 30S subunit in the 70S ribosome.

In terms of biological role, this is one of the proteins that bind and probably mediate the attachment of the 5S RNA into the large ribosomal subunit, where it forms part of the central protuberance. In the 70S ribosome it contacts protein S13 of the 30S subunit (bridge B1b), connecting the 2 subunits; this bridge is implicated in subunit movement. Contacts the P site tRNA; the 5S rRNA and some of its associated proteins might help stabilize positioning of ribosome-bound tRNAs. The protein is Large ribosomal subunit protein uL5 (rplE) of Serratia marcescens.